The chain runs to 906 residues: Protein translocase subunit SecA (906 aa).

Residues Q86, 104 to 108 (GEGKT), and D511 contribute to the ATP site. Positions 852 to 888 (EHESVIDNNQRHDEDEQEEAPKVKQVRREGPKVKRND) are enriched in basic and acidic residues. The tract at residues 852–906 (EHESVIDNNQRHDEDEQEEAPKVKQVRREGPKVKRNDPCPCGSGKKYKQCHSKVE) is disordered. Zn(2+) is bound by residues C890, C892, C901, and H902. Residues 896–906 (KKYKQCHSKVE) are compositionally biased toward basic residues.

Belongs to the SecA family. Monomer and homodimer. Part of the essential Sec protein translocation apparatus which comprises SecA, SecYEG and auxiliary proteins SecDF-YajC and YidC. Requires Zn(2+) as cofactor.

The protein resides in the cell inner membrane. Its subcellular location is the cytoplasm. The catalysed reaction is ATP + H2O + cellular proteinSide 1 = ADP + phosphate + cellular proteinSide 2.. Part of the Sec protein translocase complex. Interacts with the SecYEG preprotein conducting channel. Has a central role in coupling the hydrolysis of ATP to the transfer of proteins into and across the cell membrane, serving both as a receptor for the preprotein-SecB complex and as an ATP-driven molecular motor driving the stepwise translocation of polypeptide chains across the membrane. The sequence is that of Protein translocase subunit SecA from Francisella tularensis subsp. tularensis (strain SCHU S4 / Schu 4).